The following is a 786-amino-acid chain: Pentatricopeptide repeat-containing protein 10, chloroplastic (786 aa).

Residues 1–71 are disordered; the sequence is MEATGRGLFP…HQTPTPPHSF (71 aa). The N-terminal 95 residues, 1 to 95, are a transit peptide targeting the chloroplast; the sequence is MEATGRGLFP…HPLPTLAAFL (95 aa). Pro residues predominate over residues 27-36; that stretch reads PAAPPPPSPS. Positions 37–50 are enriched in low complexity; the sequence is SLPLDSLLLHLTAP. PPR repeat units lie at residues 137-167, 173-207, 208-243, 244-278, 279-313, 314-348, 349-383, 384-418, 419-453, 454-488, 489-523, 524-558, 560-594, 595-629, 630-664, 666-700, 701-735, and 736-770; these read DASA…TPLP, DVRA…GVAP, TLVT…GVEP, DGFT…GHAP, CVVT…GCQP, DAVT…GLLP, NAFT…GFVP, NVNT…GCTP, NRVT…GVEL, SRDT…GFTP, CITT…GFKP, NEQS…GAVF, SWVI…GYNP, DLVI…GLSP, DLIT…QTMK, DVVS…GMAP, CAVT…GLKP, and MELT…DLDF.

Belongs to the PPR family. P subfamily. In terms of assembly, forms homodimers.

The protein localises to the plastid. It is found in the chloroplast stroma. Functionally, involved in chloroplast mRNA stability. Binds specifically to two intergenic RNA regions of similar sequence located in the chloroplast atpH 5'-UTR and psaJ 3'-UTR, and serves as a barrier to RNA decay. Binding to a specific site in the intergenic region of the chloroplast atpH is sufficient to block 5'-3' and 3'-5' exonucleases. Acts as a protein barrier to block mRNA degradation by exonucleases, and defines processed mRNA termini in chloroplasts. Remodels the structure of the atpH ribosome-binding site in a manner that can account for its ability to enhance translation. Stabilizes a RNA 3'-end downstream from psaI. Binds atpH RNA as a monomer. The protein is Pentatricopeptide repeat-containing protein 10, chloroplastic of Zea mays (Maize).